The following is a 463-amino-acid chain: MTAEMDMALMQGCVTFQDVAICFSHEEWRLLDETQRLLYLSVMLQNFALINSQGCGHKTEDEERRVSTRASKGLRSETTPKTNLCEKCVPILQDILCLPGLPGQKHSTEASSKVDQHQDHNSTGKPLEKNADRSSYLFYLSAKSFPSWDVEKDLPDILSLLKSQVCPKTKKYRKSTEGRKETSHESDKSEECQSLSSQKQTLAHHPKTSNGKKLYECSKCGKTFRGKYSLDQHQRVHTGERPWECRDCGKFFSQTSHLNDHRRIHTGERPYECSECGKLFRQNSSLVDHQKTHTGARPYECSQCGKSFSQKATLVKHKRVHTGERPYKCSECGNSFSQSAILNQHRRIHTGVKPYECRECGKSFSQKATLIKHQRVHTGERPYKCSECGKSFSQSSILIQHRRIHTGARPYECSQCGKSFSQKSGLIQHQVVHTGERPYECDTCGNSFSQCSSLIHHQKCHNA.

The KRAB domain maps to 14–89 (VTFQDVAICF…PKTNLCEKCV (76 aa)). Disordered regions lie at residues 106–128 (HSTE…KPLE) and 171–211 (KYRK…TSNG). A compositionally biased stretch (basic and acidic residues) spans 174-191 (KSTEGRKETSHESDKSEE). Residues 192–201 (CQSLSSQKQT) are compositionally biased toward polar residues. 9 C2H2-type zinc fingers span residues 215–237 (YECS…QRVH), 243–265 (WECR…RRIH), 271–293 (YECS…QKTH), 299–321 (YECS…KRVH), 327–349 (YKCS…RRIH), 355–377 (YECR…QRVH), 383–405 (YKCS…RRIH), 411–433 (YECS…QVVH), and 439–461 (YECD…QKCH).

The protein belongs to the krueppel C2H2-type zinc-finger protein family. As to quaternary structure, interacts with HNRPK. As to expression, expressed in ovary and liver, and at lower levels in brain and muscle.

The protein resides in the nucleus. Functionally, may be a transcriptional repressor. The protein is Zinc finger protein interacting with ribonucleoprotein K (Zik1) of Mus musculus (Mouse).